We begin with the raw amino-acid sequence, 367 residues long: 2-aminoethylphosphonate--pyruvate transaminase (367 aa).

Lys193 is subject to N6-(pyridoxal phosphate)lysine.

Belongs to the class-V pyridoxal-phosphate-dependent aminotransferase family. PhnW subfamily. As to quaternary structure, homodimer. Pyridoxal 5'-phosphate serves as cofactor.

It catalyses the reaction (2-aminoethyl)phosphonate + pyruvate = phosphonoacetaldehyde + L-alanine. Involved in phosphonate degradation. The polypeptide is 2-aminoethylphosphonate--pyruvate transaminase (Vibrio cholerae serotype O1 (strain ATCC 39541 / Classical Ogawa 395 / O395)).